A 404-amino-acid polypeptide reads, in one-letter code: Sulfate adenylyltransferase (404 aa).

This sequence belongs to the sulfate adenylyltransferase family.

The enzyme catalyses sulfate + ATP + H(+) = adenosine 5'-phosphosulfate + diphosphate. It participates in sulfur metabolism; hydrogen sulfide biosynthesis; sulfite from sulfate: step 1/3. The protein is Sulfate adenylyltransferase of Chlorobaculum tepidum (strain ATCC 49652 / DSM 12025 / NBRC 103806 / TLS) (Chlorobium tepidum).